The sequence spans 476 residues: MSPQTETKASVGFKAGVKDYKLTYYTPDYETLDTDILAAFRVTPQPGVPAEEAGAAVAAESSTGTWTTVWTDGLTSLDRYKGRCYHIEPVAGDENQYICYVAYPLDLFEEGSVTNMFTSIVGNVFGFKALRALRLEDLRIPVAYIKTFLGPPHGIQVERDKLNKYGRPLLGCTIKPKLGLSAKNYGRAVYECLRGGLDFTKDDENVNSQPFMRWRDRFLFCAEAINKAQAETGEIKGHYLNATAGTCEEMIKRAVFARELGVPIVMHDYITGGFTANTSLAHYCRDNGLLLHIHRAMHAVIDRQKNHGMHFRVLAKALRLSGGDHIHSGTVVGKLEGERDITLGFVDLLRDDFTEKDRSRGIYFTQSWVSTPGVLPVASGGIHVWHMPALTEIFGDDSVLQFGGGTLGHPWGNAPGAVANRVALEACVQARNEGRDLAREGNTIIREACKWSPELAAACEVWKEIKFEFQAMDTID.

The propeptide occupies 1–2 (MS). Pro-3 is subject to N-acetylproline. At Lys-14 the chain carries N6,N6,N6-trimethyllysine. Substrate-binding residues include Asn-123 and Thr-173. Lys-175 (proton acceptor) is an active-site residue. Lys-177 is a binding site for substrate. Residues Lys-201, Asp-203, and Glu-204 each coordinate Mg(2+). The residue at position 201 (Lys-201) is an N6-carboxylysine. Catalysis depends on His-294, which acts as the Proton acceptor. Residues Arg-295, His-327, and Ser-379 each coordinate substrate.

The protein belongs to the RuBisCO large chain family. Type I subfamily. Heterohexadecamer of 8 large chains and 8 small chains; disulfide-linked. The disulfide link is formed within the large subunit homodimers. Requires Mg(2+) as cofactor. Post-translationally, the disulfide bond which can form in the large chain dimeric partners within the hexadecamer appears to be associated with oxidative stress and protein turnover.

It is found in the plastid. Its subcellular location is the chloroplast. It carries out the reaction 2 (2R)-3-phosphoglycerate + 2 H(+) = D-ribulose 1,5-bisphosphate + CO2 + H2O. It catalyses the reaction D-ribulose 1,5-bisphosphate + O2 = 2-phosphoglycolate + (2R)-3-phosphoglycerate + 2 H(+). Functionally, ruBisCO catalyzes two reactions: the carboxylation of D-ribulose 1,5-bisphosphate, the primary event in carbon dioxide fixation, as well as the oxidative fragmentation of the pentose substrate in the photorespiration process. Both reactions occur simultaneously and in competition at the same active site. The protein is Ribulose bisphosphate carboxylase large chain of Arenaria drummondii (Drummond sandwort).